The sequence spans 130 residues: Glycine cleavage system H protein (130 aa).

The Lipoyl-binding domain occupies 24 to 106; the sequence is SVTVGITEHA…YGDGWIMRIQ (83 aa). Lysine 65 carries the N6-lipoyllysine modification.

This sequence belongs to the GcvH family. As to quaternary structure, the glycine cleavage system is composed of four proteins: P, T, L and H. (R)-lipoate serves as cofactor.

Functionally, the glycine cleavage system catalyzes the degradation of glycine. The H protein shuttles the methylamine group of glycine from the P protein to the T protein. This is Glycine cleavage system H protein from Halorhodospira halophila (strain DSM 244 / SL1) (Ectothiorhodospira halophila (strain DSM 244 / SL1)).